Here is a 154-residue protein sequence, read N- to C-terminus: Cytochrome c-type biogenesis protein CcmE (154 aa).

The Cytoplasmic portion of the chain corresponds to methionine 1–arginine 7. Residues leucine 8–alanine 28 form a helical; Signal-anchor for type II membrane protein membrane-spanning segment. Residues phenylalanine 29–proline 154 are Periplasmic-facing. 2 residues coordinate heme: histidine 121 and tyrosine 125. Residues alanine 131–proline 154 form a disordered region.

It belongs to the CcmE/CycJ family.

The protein localises to the cell inner membrane. In terms of biological role, heme chaperone required for the biogenesis of c-type cytochromes. Transiently binds heme delivered by CcmC and transfers the heme to apo-cytochromes in a process facilitated by CcmF and CcmH. The polypeptide is Cytochrome c-type biogenesis protein CcmE (Methylibium petroleiphilum (strain ATCC BAA-1232 / LMG 22953 / PM1)).